Consider the following 134-residue polypeptide: MPTTQQLLRKGRTTLQKKSKVPALKGSPFRRGVCTVVKTTTPKKPNSALRKIARVRLSSGFEVTAYIPGEGHNLQEHSVVLIRGGRVKDLPGVRYHIVRGSLDTQGVKDRNKSRSKYGTKKPKAGAAAAGAKKK.

A disordered region spans residues 1–26 (MPTTQQLLRKGRTTLQKKSKVPALKG). Over residues 9–20 (RKGRTTLQKKSK) the composition is skewed to basic residues. Aspartate 89 carries the post-translational modification 3-methylthioaspartic acid. Positions 103–134 (DTQGVKDRNKSRSKYGTKKPKAGAAAAGAKKK) are disordered. A compositionally biased stretch (basic residues) spans 113–123 (SRSKYGTKKPK). The segment covering 124–134 (AGAAAAGAKKK) has biased composition (low complexity).

Belongs to the universal ribosomal protein uS12 family. As to quaternary structure, part of the 30S ribosomal subunit. Contacts proteins S8 and S17. May interact with IF1 in the 30S initiation complex.

Its function is as follows. With S4 and S5 plays an important role in translational accuracy. In terms of biological role, interacts with and stabilizes bases of the 16S rRNA that are involved in tRNA selection in the A site and with the mRNA backbone. Located at the interface of the 30S and 50S subunits, it traverses the body of the 30S subunit contacting proteins on the other side and probably holding the rRNA structure together. The combined cluster of proteins S8, S12 and S17 appears to hold together the shoulder and platform of the 30S subunit. This Deinococcus geothermalis (strain DSM 11300 / CIP 105573 / AG-3a) protein is Small ribosomal subunit protein uS12.